The sequence spans 181 residues: ATP-dependent protease subunit HslV (181 aa).

The active site involves threonine 11. Positions 166, 169, and 172 each coordinate Na(+).

Belongs to the peptidase T1B family. HslV subfamily. As to quaternary structure, a double ring-shaped homohexamer of HslV is capped on each side by a ring-shaped HslU homohexamer. The assembly of the HslU/HslV complex is dependent on binding of ATP.

It localises to the cytoplasm. The enzyme catalyses ATP-dependent cleavage of peptide bonds with broad specificity.. With respect to regulation, allosterically activated by HslU binding. Functionally, protease subunit of a proteasome-like degradation complex believed to be a general protein degrading machinery. The sequence is that of ATP-dependent protease subunit HslV from Chlorobaculum tepidum (strain ATCC 49652 / DSM 12025 / NBRC 103806 / TLS) (Chlorobium tepidum).